A 552-amino-acid chain; its full sequence is Hydroxylamine reductase (552 aa).

[2Fe-2S] cluster-binding residues include C3, C6, C18, and C25. H250, E274, C318, C406, C434, C459, E493, and K495 together coordinate hybrid [4Fe-2O-2S] cluster. C406 is subject to Cysteine persulfide.

It belongs to the HCP family. The cofactor is [2Fe-2S] cluster. It depends on hybrid [4Fe-2O-2S] cluster as a cofactor.

It is found in the cytoplasm. It carries out the reaction A + NH4(+) + H2O = hydroxylamine + AH2 + H(+). Catalyzes the reduction of hydroxylamine to form NH(3) and H(2)O. This is Hydroxylamine reductase from Shewanella woodyi (strain ATCC 51908 / MS32).